Here is a 108-residue protein sequence, read N- to C-terminus: Insulin (108 aa).

The N-terminal stretch at 1–21 (MAVWLQAGALLVLLVVSSVST) is a signal peptide. 3 cysteine pairs are disulfide-bonded: C30/C94, C42/C107, and C93/C98. The propeptide at 54-84 (DVEPLLGFLPPKSAQETEVADFAFKDHAELI) is c peptide.

This sequence belongs to the insulin family. In terms of assembly, heterodimer of a B chain and an A chain linked by two disulfide bonds.

The protein resides in the secreted. In terms of biological role, insulin decreases blood glucose concentration. It increases cell permeability to monosaccharides, amino acids and fatty acids. It accelerates glycolysis, the pentose phosphate cycle, and glycogen synthesis in liver. This chain is Insulin (ins), found in Danio rerio (Zebrafish).